The following is a 450-amino-acid chain: FAD-linked oxidoreductase ptmO (450 aa).

The 172-residue stretch at 32 to 203 (PPELPYAIVR…TRFFIRTRPA (172 aa)) folds into the FAD-binding PCMH-type domain.

The protein belongs to the oxygen-dependent FAD-linked oxidoreductase family. It depends on FAD as a cofactor.

It participates in secondary metabolite biosynthesis. Functionally, FAD-linked oxidoreductase; part of the gene cluster that mediates the biosynthesis of the indole diterpenes penitrems. The geranylgeranyl diphosphate (GGPP) synthase ptmG catalyzes the first step in penitrem biosynthesis via conversion of farnesyl pyrophosphate and isopentyl pyrophosphate into geranylgeranyl pyrophosphate (GGPP). Condensation of indole-3-glycerol phosphate with GGPP by the prenyl transferase ptmC then forms 3-geranylgeranylindole (3-GGI). Epoxidation by the FAD-dependent monooxygenase ptmM leads to a epoxidized-GGI that is substrate of the terpene cyclase ptmB for cyclization to yield paspaline. Paspaline is subsequently converted to 13-desoxypaxilline by the cytochrome P450 monooxygenase ptmP, the latter being then converted to paxilline by the cytochrome P450 monooxygenase ptmQ. Paxilline is converted to beta-paxitriol via C-10 ketoreduction by the short-chain dehydrogenase ptmH which can be monoprenylated at the C-20 by the indole diterpene prenyltransferase ptmD. A two-step elimination (acetylation and elimination) process performed by the O-acetyltransferase ptmV and ptmI leads to the production of the prenylated form of penijanthine. The FAD-linked oxidoreductase ptmO then converts the prenylated form of penijanthine into PC-M5 which is in turn transformed into PC-M4 by the aromatic dimethylallyltransferase ptmE. Five sequential oxidative transformations performed by the cytochrome P450 monooxygenases ptmK, ptmU, ptmL, ptmN and ptmJ yield the various penitrem compounds. PtmK, ptmU and ptmM are involved in the formation of the key bicyclic ring of penitrem C via the formation of the intermediates secopenitrem D and penitrem D. PtmL catalyzes the epoxidation of penitrem D and C to yield penitrem B and F, respectively. PtmJ catalyzes the last benzylic hydroxylation to convert penitrem B to prenitrem E and penitrem F to penitrem A. The polypeptide is FAD-linked oxidoreductase ptmO (Penicillium ochrochloron).